Consider the following 137-residue polypeptide: MSAHLQWMVVRNCSSFLIKRNKQTYSTEPNNLKARNSFRYNGLIHRKTVGVEPAADGKGVVVVIKRRSGQRKPATSYVRTTINKNARATLSSIRHMIRKNKYRPDLRMAAIRRASAILRSQKPVMVKRKRTRPTKSS.

An N-acetylserine modification is found at S2. Glycyl lysine isopeptide (Lys-Gly) (interchain with G-Cter in SUMO2) cross-links involve residues K58 and K65. A Phosphoserine modification is found at S115.

The protein belongs to the eukaryotic ribosomal protein eL28 family. As to quaternary structure, component of the large ribosomal subunit.

It is found in the cytoplasm. Its function is as follows. Component of the large ribosomal subunit. The ribosome is a large ribonucleoprotein complex responsible for the synthesis of proteins in the cell. This Homo sapiens (Human) protein is Large ribosomal subunit protein eL28 (RPL28).